Consider the following 988-residue polypeptide: Protein SEMI-ROLLED LEAF 2 (988 aa).

The tract at residues 844–865 is disordered; that stretch reads SVDGGLHESPITNTGSSISKTT. The span at 853–865 shows a compositional bias: polar residues; that stretch reads PITNTGSSISKTT.

As to expression, expressed in root tips, and in the vascular bundles of leaf blades, leaf sheaths, and roots, especially in their sclerenchymatous cells.

It localises to the nucleus. It is found in the cytoplasm. Functionally, functions in regulating leaf rolling through abaxial side leaf cell differentiation. May be involved in the transdifferentiation process from mesophyll cells to sclerenchymatous cells. In Oryza sativa subsp. japonica (Rice), this protein is Protein SEMI-ROLLED LEAF 2.